The chain runs to 80 residues: UPF0057 membrane protein ZK632.10 (80 aa).

2 helical membrane passes run Ile-4 to Cys-24 and Ile-32 to Cys-52.

The protein belongs to the UPF0057 (PMP3) family.

The protein localises to the membrane. The sequence is that of UPF0057 membrane protein ZK632.10 from Caenorhabditis elegans.